The chain runs to 1430 residues: Target of rapamycin complex 2 subunit TSC11 (1430 aa).

The tract at residues 1 to 62 (MSIPHSAKQS…TITNESSKRN (62 aa)) is disordered. 2 stretches are compositionally biased toward polar residues: residues 7 to 26 (AKQS…TTPL) and 35 to 44 (NSSTQISSAK). Phosphoserine is present on Ser19. Positions 45-57 (NITSSSPSTITNE) are enriched in low complexity. A phosphoserine mark is found at Ser81, Ser84, Ser87, and Ser141. Residues 91-180 (ARRTRSTMTK…EKHIFDLKQQ (90 aa)) are a coiled coil. Residues 182-285 (DKKRQRSLTT…NLTGDTEKDL (104 aa)) are disordered. Positions 233–265 (TTPTSGTERNSQQNLNRNSTVNSRNNENHSTLS) are enriched in polar residues. The 106-residue stretch at 995 to 1100 (SVVAVADQAL…FQQKSRLPLH (106 aa)) folds into the N-terminal Ras-GEF domain.

Belongs to the RICTOR family. As to quaternary structure, the target of rapamycin complex 2 (TORC2) is composed of at least AVO1, AVO2, BIT61, LST8, TOR2 and TSC11. TORC2 forms a homodimer. Contrary to TORC1, TORC2 does not bind to and is not sensitive to FKBP-rapamycin. TSC11 binds to the N-terminal HEAT repeat region in TOR2 and is required for TORC2 integrity by tethering AVO1 and AVO2 to the complex. Phosphorylated by TOR2; when part of TORC2.

It is found in the cell membrane. The protein resides in the vacuole membrane. Functionally, essential component of TORC2, which regulates cell cycle-dependent polarization of the actin-cytoskeleton and cell wall integrity. TORC2 controls polarity of the actin cytoskeleton, which is required for orienting the secretory pathway toward discrete growth sites, via the RHO1/PKC1/MAPK cell integrity pathway. TSC11 may exert its functions through two distinct mechanisms, one mediated by AVO1 and the other mediated by AVO2 and SLM1. The sequence is that of Target of rapamycin complex 2 subunit TSC11 (TSC11) from Saccharomyces cerevisiae (strain ATCC 204508 / S288c) (Baker's yeast).